The following is an 89-amino-acid chain: SAP domain-containing new25 (89 aa).

In terms of domain architecture, SAP spans 44–78 (PSQWSKKQLIEYCKKNSLKTSGSHEELVIRVQNHL).

The chain is SAP domain-containing new25 (new25) from Schizosaccharomyces pombe (strain 972 / ATCC 24843) (Fission yeast).